Here is a 250-residue protein sequence, read N- to C-terminus: Cell division protein ZapD (250 aa).

The protein belongs to the ZapD family. In terms of assembly, interacts with FtsZ.

It localises to the cytoplasm. Functionally, cell division factor that enhances FtsZ-ring assembly. Directly interacts with FtsZ and promotes bundling of FtsZ protofilaments, with a reduction in FtsZ GTPase activity. The sequence is that of Cell division protein ZapD from Serratia proteamaculans (strain 568).